A 119-amino-acid polypeptide reads, in one-letter code: MVKQTKAKTFQAYLDSCHRRYSCVHCRAHLANHDDLISKSFQGSQGRAYLFNSVVNVGCGPAEERLLLTGLHAVADIYCENCHTTLGWKYEQAFELSQKYKEGKFIIELSHMIKDNGWD.

The Yippee domain occupies 19-116 (RRYSCVHCRA…IELSHMIKDN (98 aa)). Residues Cys-23, Cys-26, Cys-79, and Cys-82 each contribute to the Zn(2+) site.

This sequence belongs to the yippee family.

It localises to the nucleus. The protein resides in the nucleolus. In terms of biological role, may be involved in proliferation and apoptosis in myeloid precursor cells. In Danio rerio (Zebrafish), this protein is Protein yippee-like 3 (ypel3).